A 241-amino-acid chain; its full sequence is Methylosome subunit pICln (241 aa).

Residues 88 to 112 are disordered; the sequence is EDKEAHMADQEEEESEDDDDDEEPI. A compositionally biased stretch (acidic residues) spans 97–112; sequence QEEEESEDDDDDEEPI.

It belongs to the pICln (TC 1.A.47) family. In terms of assembly, component of the methylosome, a 20S complex containing at least clns1a/picln, prmt5/skb1 and wdr77/mep50; may mediate snrpd1 and snrpd3 methylation. Forms a 6S pICln-Sm complex composed of clns1a/picln, snrpd1, snrpd2, snrpe, snrpf and snrpg; ring-like structure where clns1a/pICln mimics additional Sm proteins and which is unable to assemble into the core snRNP.

The protein resides in the cytoplasm. It localises to the cytosol. It is found in the nucleus. Its subcellular location is the cytoskeleton. In terms of biological role, involved in both the assembly of spliceosomal snRNPs and the methylation of Sm proteins. Chaperone that regulates the assembly of spliceosomal U1, U2, U4 and U5 small nuclear ribonucleoproteins (snRNPs), the building blocks of the spliceosome, and thereby plays an important role in the splicing of cellular pre-mRNAs. Most spliceosomal snRNPs contain a common set of Sm proteins SNRPB, SNRPD1, SNRPD2, SNRPD3, SNRPE, SNRPF and SNRPG that assemble in a heptameric protein ring on the Sm site of the small nuclear RNA to form the core snRNP (Sm core). In the cytosol, the Sm proteins SNRPD1, SNRPD2, SNRPE, SNRPF and SNRPG are trapped in an inactive 6S pICln-Sm complex by the chaperone CLNS1A that controls the assembly of the core snRNP. Dissociation by the SMN complex of CLNS1A from the trapped Sm proteins and their transfer to an SMN-Sm complex triggers the assembly of core snRNPs and their transport to the nucleus. This Xenopus laevis (African clawed frog) protein is Methylosome subunit pICln (clns1a).